The chain runs to 424 residues: Probable carboxypeptidase AN5749 (424 aa).

An N-terminal signal peptide occupies residues 1-17 (MNLSILAALALVSFSTA). An N-linked (GlcNAc...) asparagine glycan is attached at asparagine 58. Aspartate 139 serves as a coordination point for Zn(2+). Residue glutamate 171 is the Proton acceptor of the active site. A Zn(2+)-binding site is contributed by glutamate 172. Residues asparagine 184 and asparagine 323 are each glycosylated (N-linked (GlcNAc...) asparagine).

This sequence belongs to the peptidase M20A family. Zn(2+) serves as cofactor.

The protein resides in the secreted. This Emericella nidulans (strain FGSC A4 / ATCC 38163 / CBS 112.46 / NRRL 194 / M139) (Aspergillus nidulans) protein is Probable carboxypeptidase AN5749.